Here is a 177-residue protein sequence, read N- to C-terminus: CASP-like protein 2U1 (177 aa).

The helical transmembrane segment at 1–21 threads the bilayer; sequence MVLRIVASLLSIAALVLMAKD. The Cytoplasmic portion of the chain corresponds to 22 to 48; sequence KQVVYLNLAGEELTLEAKHSYVEAFVY. Residues 49 to 69 form a helical membrane-spanning segment; sequence LVYSNGLVAIYCFLLVFALVF. The Extracellular portion of the chain corresponds to 70–80; that stretch reads RLIDKAGCGKS. Residues 81 to 101 form a helical membrane-spanning segment; that stretch reads AAWIIFLLDQGLAYVLLAAAA. Topologically, residues 102–131 are cytoplasmic; sequence ASTEVAYVAKRGNNKVGWSEVCSTFGHFCN. A helical membrane pass occupies residues 132–152; the sequence is LVGVSIVITFISVLAMATLSV. The Extracellular segment spans residues 153–177; that stretch reads MSARRLFKTYGPERKQISSNDAPAI.

This sequence belongs to the Casparian strip membrane proteins (CASP) family. As to quaternary structure, homodimer and heterodimers.

The protein resides in the cell membrane. This chain is CASP-like protein 2U1, found in Osmunda lancea (Fern).